We begin with the raw amino-acid sequence, 244 residues long: Probable transcriptional regulatory protein CBU_1566 (244 aa).

This sequence belongs to the TACO1 family.

Its subcellular location is the cytoplasm. The chain is Probable transcriptional regulatory protein CBU_1566 from Coxiella burnetii (strain RSA 493 / Nine Mile phase I).